The chain runs to 319 residues: MKTFGKKVVLIGDGSVGSSYAFAMVTQGVADEFVIIDIAKDKVKADVQDLNHGTVHSPSPVDVKAGEYEDCKDADLVVITAGAPQKPGETRLQLVEKNTKIMKSIVKSVMDSGFDGYFLIAANPVDILTRFVKEYTGLPAERVIGSGTVLDSARLQYLISQELGVAPSSVDASIIGEHGDTELAVWSQANVAGISVYDTLKEQTGSEAKAEEIYVNTRDAAYEIIQAKGSTYYGIALALMRISKAILNNENNVLNVSIQLDGQYGGHKGVYLGVPTLVNQHGAVKIYEMPLSAEEQALFDKSVKILEDTFDSIKYLLED.

NAD(+)-binding positions include Val-16, Asp-37, Lys-42, Tyr-68, and Gly-82–Ala-83. Substrate is bound by residues Gln-85 and Arg-91. NAD(+) is bound by residues Ser-104, Ala-121–Asn-123, and Ser-146. Asn-123 to Asp-126 contributes to the substrate binding site. Asp-151–Arg-154 contacts substrate. His-178 (proton acceptor) is an active-site residue. At Tyr-222 the chain carries Phosphotyrosine. A substrate-binding site is contributed by Thr-231.

Belongs to the LDH/MDH superfamily. LDH family. In terms of assembly, homotetramer.

It is found in the cytoplasm. The enzyme catalyses (S)-lactate + NAD(+) = pyruvate + NADH + H(+). It participates in fermentation; pyruvate fermentation to lactate; (S)-lactate from pyruvate: step 1/1. Its function is as follows. Catalyzes the conversion of lactate to pyruvate (Potential). Contributes to S.aureus growth during nitrosative stress in both aerobically and anaerobically cultured cells, despite playing a secondary role in this resistance mechanism. This chain is L-lactate dehydrogenase 2, found in Staphylococcus aureus (strain Mu3 / ATCC 700698).